A 606-amino-acid chain; its full sequence is Transmembrane 9 superfamily member 1 (606 aa).

Residues 1–27 form the signal peptide; that stretch reads MTVLGYPRSWSCHCLPVLILLLGIGHG. Residue Asn178 is glycosylated (N-linked (GlcNAc...) asparagine). A run of 4 helical transmembrane segments spans residues 237-257, 310-330, 339-359, and 373-393; these read LSIINSMVLVFLLVGFVAVIL, VLGVGAQFLALGTGIIVMALL, GAINSAAILLYALTCCISGYV, and VWNIILTSSLFSVPFFLTWSV. Asn401 is a glycosylation site (N-linked (GlcNAc...) asparagine). Helical transmembrane passes span 412-432, 469-489, 499-519, and 535-555; these read ILLLLTVWLLVGFPLTVIGGI, VGGFLPFSAISVELYYIFATV, GILFFVFAILLSVGACISIAL, and SVLSVGSTGLFIFLYSVFYYA. An N-linked (GlcNAc...) asparagine glycan is attached at Asn559. A helical membrane pass occupies residues 570 to 590; that stretch reads FGYSLLTGYVFFLMLGTISFF.

It belongs to the nonaspanin (TM9SF) (TC 9.A.2) family.

The protein resides in the lysosome membrane. Its subcellular location is the cytoplasmic vesicle. It is found in the autophagosome membrane. In terms of biological role, plays an essential role in autophagy. This chain is Transmembrane 9 superfamily member 1 (Tm9sf1), found in Mus musculus (Mouse).